Consider the following 406-residue polypeptide: Phosphatidylinositol 5-phosphate 4-kinase type-2 alpha (406 aa).

The residue at position 2 (Ala2) is an N-acetylalanine. Thr3 carries the phosphothreonine modification. At Ser14 the chain carries Phosphoserine. Residues 33 to 405 (ASDPLLSVLM…RFLDFIGHIL (373 aa)) enclose the PIPK domain. The interval 59 to 65 (VMLMPDD) is required for interaction with PIP5K1A. An N6-acetyllysine mark is found at Lys89 and Lys145. Positions 287-328 (EQEEVECEENEGEEEGESDGAHPIGTPPDSPGNTLNSSPPLA) are disordered. The segment covering 289–304 (EEVECEENEGEEEGES) has biased composition (acidic residues).

In terms of assembly, homodimer. Interacts with PIP4K2B; the interaction may regulate localization to the nucleus. Probably interacts with PIP5K1A; the interaction inhibits PIP5K1A kinase activity. In terms of processing, phosphorylated in tyrosines. Phosphorylation is induced by light and increases kinase activity.

Its subcellular location is the cell membrane. It is found in the nucleus. It localises to the lysosome. The protein localises to the cytoplasm. The protein resides in the photoreceptor inner segment. Its subcellular location is the cell projection. It is found in the cilium. It localises to the photoreceptor outer segment. The catalysed reaction is a 1,2-diacyl-sn-glycero-3-phospho-(1D-myo-inositol-5-phosphate) + ATP = a 1,2-diacyl-sn-glycero-3-phospho-(1D-myo-inositol-4,5-bisphosphate) + ADP + H(+). It catalyses the reaction 1,2-dihexadecanoyl-sn-glycero-3-phospho-(1D-myo-inositol-5-phosphate) + ATP = 1,2-dihexadecanoyl-sn-glycero-3-phospho-(1D-myo-inositol-4,5-bisphosphate) + ADP + H(+). It carries out the reaction 1,2-dihexadecanoyl-sn-glycero-3-phospho-(1D-myo-inositol-5-phosphate) + GTP = 1,2-dihexadecanoyl-sn-glycero-3-phospho-(1D-myo-inositol-4,5-bisphosphate) + GDP + H(+). In rod outer segments, activated by light. In terms of biological role, catalyzes the phosphorylation of phosphatidylinositol 5-phosphate (PtdIns5P) on the fourth hydroxyl of the myo-inositol ring, to form phosphatidylinositol 4,5-bisphosphate (PtdIns(4,5)P2). Has both ATP- and GTP-dependent kinase activities. May exert its function by regulating the levels of PtdIns5P, which functions in the cytosol by increasing AKT activity and in the nucleus signals through ING2. May regulate the pool of cytosolic PtdIns5P in response to the activation of tyrosine phosphorylation. Required for lysosome-peroxisome membrane contacts and intracellular cholesterol transport through modulating peroxisomal PtdIns(4,5)P2 level. In collaboration with PIP4K2B, has a role in mediating autophagy in times of nutrient stress. Required for autophagosome-lysosome fusion and the regulation of cellular lipid metabolism. Negatively regulates insulin signaling through a catalytic-independent mechanism. PIP4Ks interact with PIP5Ks and suppress PIP5K-mediated PtdIns(4,5)P2 synthesis and insulin-dependent conversion to PtdIns(3,4,5)P3. May be involved in thrombopoiesis, and the terminal maturation of megakaryocytes and regulation of their size. The protein is Phosphatidylinositol 5-phosphate 4-kinase type-2 alpha of Rattus norvegicus (Rat).